Here is an 830-residue protein sequence, read N- to C-terminus: Probable glucan 1,3-beta-glucosidase D (830 aa).

Composition is skewed to basic and acidic residues over residues 1-11 and 74-84; these read MPGHSRSRDRL and VHEHDHDHEYD. Disordered stretches follow at residues 1–91, 127–163, and 260–297; these read MPGH…EEPW, MSGA…QRRK, and GGPG…STSA. The Cytoplasmic segment spans residues 1-307; that stretch reads MPGHSRSRDR…RPSFWKRYHK (307 aa). Basic residues predominate over residues 147-163; the sequence is GKGKKRLDRETRRQRRK. A helical; Signal-anchor for type II membrane protein membrane pass occupies residues 308 to 328; it reads TFIFFAILIVLAAIAIPVGII. Residues 329–830 lie on the Extracellular side of the membrane; it reads EARRLHGTSG…PSFGNLPEYY (502 aa). 7 N-linked (GlcNAc...) asparagine glycosylation sites follow: N341, N376, N381, N393, N397, N546, and N558. E597 (proton donor) is an active-site residue. Residues N610, N669, and N689 are each glycosylated (N-linked (GlcNAc...) asparagine). The active-site Nucleophile is the E702.

Belongs to the glycosyl hydrolase 5 (cellulase A) family.

It is found in the cell membrane. It catalyses the reaction Successive hydrolysis of beta-D-glucose units from the non-reducing ends of (1-&gt;3)-beta-D-glucans, releasing alpha-glucose.. Its function is as follows. Glucosidase involved in the degradation of cellulosic biomass. Active on lichenan. The sequence is that of Probable glucan 1,3-beta-glucosidase D (exgD) from Aspergillus niger (strain ATCC MYA-4892 / CBS 513.88 / FGSC A1513).